An 88-amino-acid chain; its full sequence is MRLFLSLPVWVAVLAMVLEGPAPAQAAPEISSTLGSIPDKLKEFGNTLEDKARAAIESIKQSDIPAKTRNWFSETFNKVKEQLKTAFS.

The signal sequence occupies residues 1–26 (MRLFLSLPVWVAVLAMVLEGPAPAQA).

This sequence belongs to the apolipoprotein C1 family.

It is found in the secreted. In terms of biological role, inhibitor of lipoprotein binding to the low density lipoprotein (LDL) receptor, LDL receptor-related protein, and very low density lipoprotein (VLDL) receptor. Associates with high density lipoproteins (HDL) and the triacylglycerol-rich lipoproteins in the plasma and makes up about 10% of the protein of the VLDL and 2% of that of HDL. Appears to interfere directly with fatty acid uptake and is also the major plasma inhibitor of cholesteryl ester transfer protein (CETP). Binds free fatty acids and reduces their intracellular esterification. Modulates the interaction of APOE with beta-migrating VLDL and inhibits binding of beta-VLDL to the LDL receptor-related protein. This is Apolipoprotein C-I (APOC1) from Ursus maritimus (Polar bear).